A 101-amino-acid chain; its full sequence is NADH-quinone oxidoreductase subunit K (101 aa).

3 consecutive transmembrane segments (helical) span residues 4-24 (LTHYLVLGALLFGISAMGIFM), 30-50 (LVLLMSIELMLLAVNFNFIAF), and 61-81 (IFVFFVLTVAAAESAIGLAIM).

Belongs to the complex I subunit 4L family. NDH-1 is composed of 14 different subunits. Subunits NuoA, H, J, K, L, M, N constitute the membrane sector of the complex.

It is found in the cell inner membrane. It carries out the reaction a quinone + NADH + 5 H(+)(in) = a quinol + NAD(+) + 4 H(+)(out). Functionally, NDH-1 shuttles electrons from NADH, via FMN and iron-sulfur (Fe-S) centers, to quinones in the respiratory chain. The immediate electron acceptor for the enzyme in this species is believed to be ubiquinone. Couples the redox reaction to proton translocation (for every two electrons transferred, four hydrogen ions are translocated across the cytoplasmic membrane), and thus conserves the redox energy in a proton gradient. The sequence is that of NADH-quinone oxidoreductase subunit K from Neisseria meningitidis serogroup B (strain ATCC BAA-335 / MC58).